The following is a 264-amino-acid chain: MKSNDYTIASLKEKVREMNQAELIDFFEEESRSGALKVKQARVKQIAQETQAIHEYEQMLEYERRYNGKVVCGIDEVGRGPLAGPVIACAVILNDGHHYIGLNDSKQLSKHKRASLYDALTQSVTYAIGAASVEEIDKFNIYEATKLAMHRAIDKLPVKPDVLLIDAMNLNTGLIEESIIKGDAKSVSIAAASVIAKVYRDHLMEEIHEEFPYYDFNRNAGYGTKRHLDGLMQYGITAHHRKSFEPIKSMIKTEENAKTITKPS.

The region spanning 69–263 (KVVCGIDEVG…EENAKTITKP (195 aa)) is the RNase H type-2 domain. Positions 75, 76, and 166 each coordinate a divalent metal cation.

Belongs to the RNase HII family. Mn(2+) is required as a cofactor. It depends on Mg(2+) as a cofactor.

The protein resides in the cytoplasm. The catalysed reaction is Endonucleolytic cleavage to 5'-phosphomonoester.. Endonuclease that specifically degrades the RNA of RNA-DNA hybrids. This chain is Ribonuclease HII, found in Macrococcus caseolyticus (strain JCSC5402) (Macrococcoides caseolyticum).